We begin with the raw amino-acid sequence, 33 residues long: uncharacterized protein (33 aa).

The interval 1–24 (MRTGTRCDLGELSHPRKTLPPRGM) is disordered.

This is an uncharacterized protein from Treponema pallidum (strain Nichols).